Consider the following 390-residue polypeptide: Mevalonate kinase (390 aa).

ATP-binding positions include K16, S130, and 135–141; that span reads GAGLGSS. Positions 141 and 193 each coordinate Mg(2+). The active-site Proton acceptor is the D204.

This sequence belongs to the GHMP kinase family. Mevalonate kinase subfamily. Requires Mg(2+) as cofactor.

The protein localises to the cytoplasm. The enzyme catalyses (R)-mevalonate + ATP = (R)-5-phosphomevalonate + ADP + H(+). The protein operates within isoprenoid biosynthesis; isopentenyl diphosphate biosynthesis via mevalonate pathway; isopentenyl diphosphate from (R)-mevalonate: step 1/3. Its function is as follows. Catalyzes the phosphorylation of mevalonate to mevalonate 5-phosphate, a key step in isoprenoid biosynthesis. This is Mevalonate kinase from Dictyostelium discoideum (Social amoeba).